The chain runs to 625 residues: MKYTSAATKPGVFPEHHQHAMMRNRYHPHHCNYSDNRSAIDIIAELGSESNAHGLAKIVTSRDTKRKVIWALLVIAGFTAATLQLSLLVRKYLQFQVVELSEIKDSMPVQYPSVSICNIEPISLRTIRRMYFNNESQNLITWLRFIQKFRFEQDSFMNSIRAFYENLGQDAKKLSHNLEDMLMHCRFNRELCHVSNFSTFFDGNYFNCFTFNSGQRLQMHATGPENGLSLIFSVEKDDPLPGTYGVYNFDNNILHSAGVRVVVHAPGSMPSPVDHGIDIPPGYSSSVGLKAILHTRLPYPYGNCTNDMLNGIKQYKYTFFACLQLCKQRLIIQRCGCKSSALPEVPSYNATFCGVIKDWQEINRNHSNEDHNQSEEDRAFIPTPYLACEEREQKNLNNDRTYELSCGCFQPCSETSYLKSVSLSYWPLEFYQLSAVERFFKQERQAGQNHFMKTAYEYLEKLAHPSQKHLARNDSHMDDILSKSYSLSEKEMAKEASDLIRQNMLRLNIYLEDLSVVEYRQLPAYGLADLFADIGGTLGLWMGISVLTIMELIELVIRLTGLVFNSEKGLPRGPTTVNNNNGSNNHSQSTSQHQLYNGYMDHDSHYSDSAGASVFDFRRGVESPV.

Residues 1–67 (MKYTSAATKP…IVTSRDTKRK (67 aa)) are Cytoplasmic-facing. Residues 68–89 (VIWALLVIAGFTAATLQLSLLV) form a helical membrane-spanning segment. The Extracellular segment spans residues 90–536 (RKYLQFQVVE…LADLFADIGG (447 aa)). Residues N134, N196, N303, N349, N365, N372, and N473 are each glycosylated (N-linked (GlcNAc...) asparagine). Residues 537–557 (TLGLWMGISVLTIMELIELVI) traverse the membrane as a helical segment. Residues 558–625 (RLTGLVFNSE…DFRRGVESPV (68 aa)) lie on the Cytoplasmic side of the membrane. The interval 570–591 (LPRGPTTVNNNNGSNNHSQSTS) is disordered. Residues 575–591 (TTVNNNNGSNNHSQSTS) are compositionally biased toward low complexity.

Belongs to the amiloride-sensitive sodium channel (TC 1.A.6) family. As to expression, muscle and nervous tissue.

It localises to the membrane. Its function is as follows. FMRFamide-gated ionotropic receptor. The protein is FMRFamide-activated amiloride-sensitive sodium channel of Cornu aspersum (Brown garden snail).